Here is a 550-residue protein sequence, read N- to C-terminus: Hydroxylamine reductase (550 aa).

C3, C6, C18, and C25 together coordinate [2Fe-2S] cluster. Hybrid [4Fe-2O-2S] cluster is bound by residues H249, E273, C317, C405, C433, C458, E492, and K494. C405 is subject to Cysteine persulfide.

Belongs to the HCP family. [2Fe-2S] cluster serves as cofactor. Requires hybrid [4Fe-2O-2S] cluster as cofactor.

Its subcellular location is the cytoplasm. It catalyses the reaction A + NH4(+) + H2O = hydroxylamine + AH2 + H(+). Catalyzes the reduction of hydroxylamine to form NH(3) and H(2)O. The protein is Hydroxylamine reductase of Escherichia coli O17:K52:H18 (strain UMN026 / ExPEC).